Consider the following 627-residue polypeptide: Siderophore iron transporter ARN1 (627 aa).

Residues 1–70 (MESVHSRDPV…TEIIGSAYNK (70 aa)) are Extracellular-facing. The chain crosses the membrane as a helical span at residues 71–91 (WYLQAILLLSAFICGYGYGLD). At 92–110 (GNIRYIYTGYATSSYSEHS) the chain is on the cytoplasmic side. A helical transmembrane segment spans residues 111 to 131 (LLSTINVINAVVSAASQIIYA). Residues 132 to 135 (RLSD) lie on the Extracellular side of the membrane. Residues 136-156 (VFGRLYLFISAVILYVVGTII) traverse the membrane as a helical segment. The Cytoplasmic segment spans residues 157–167 (QSQAYDVQRYA). A helical membrane pass occupies residues 168–188 (AGAIFYNAGYVGVILILLIIL). At 189–197 (SDFSSLKWR) the chain is on the extracellular side. A helical membrane pass occupies residues 198 to 218 (LLYQFVPTWPFIINTWIAGNI). The Cytoplasmic portion of the chain corresponds to 219–231 (TSRANPVVNWSWD). Residues 232-252 (VGMWAFIFPLSCVPIVLCMLH) traverse the membrane as a helical segment. At 253–290 (MQWRARKTPEWHALKGQKSYYQEHGFIKILKQLFWMLD) the chain is on the extracellular side. Residues 291–311 (VVGVLLMGCSLGCILVPLTLA) form a helical membrane-spanning segment. Topologically, residues 312–323 (GGVKTTWNDSRL) are cytoplasmic. The chain crosses the membrane as a helical span at residues 324 to 344 (IGPFVLGFVLIPILWIWEYRF). At 345-367 (ARDPILPYRLVKDRAVWSSMGIS) the chain is on the extracellular side. The helical transmembrane segment at 368–388 (FLIDFIYYMAADYLYTVMIVA) threads the bilayer. Over 389–398 (VNESVKSATR) the chain is Cytoplasmic. The helical transmembrane segment at 399 to 419 (IATLSSFVSTVASPFFALLVT) threads the bilayer. Over 420-424 (RCTRL) the chain is Extracellular. A helical membrane pass occupies residues 425 to 445 (KPFIMFGCALWMVAMGLLYHF). The Cytoplasmic segment spans residues 446–454 (RGGSQSHSG). The chain crosses the membrane as a helical span at residues 455–475 (IIGALCVWGVGTTLFTYPVTV). Topologically, residues 476–563 (SVQSAVSHEN…LMNAYKYVQR (88 aa)) are extracellular. The helical transmembrane segment at 564-584 (LETIVALVFCVPLIAFSLCLR) threads the bilayer. The Cytoplasmic segment spans residues 585–627 (DPKLTDTVAVEYIEDGEYVDTKDNDPILDWFEKLPSKFTFKRE).

Belongs to the major facilitator superfamily.

It localises to the cell membrane. It is found in the endosome membrane. Functionally, involved in the transport of siderophore ferrichrome and so has a role in iron homeostasis. This is Siderophore iron transporter ARN1 (ARN1) from Saccharomyces cerevisiae (strain ATCC 204508 / S288c) (Baker's yeast).